A 193-amino-acid chain; its full sequence is Ion-translocating oxidoreductase complex subunit A (193 aa).

The next 6 membrane-spanning stretches (helical) occupy residues 5 to 25 (LLLFVGTVLVNNFVLVKFLGL), 47 to 67 (FVMTLASVSAWVINTFILVPL), 72 to 92 (LRTLSFILVIAVVVQFTEMVV), 102 to 122 (LLGIFLPLITTNCAVLGVALL), 134 to 154 (AVYGFSAAAGFSLVMVLFAAI), and 171 to 191 (SIALITAGLMSLAFMGFTGLV).

It belongs to the NqrDE/RnfAE family. The complex is composed of six subunits: RnfA, RnfB, RnfC, RnfD, RnfE and RnfG.

It is found in the cell inner membrane. Its function is as follows. Part of a membrane-bound complex that couples electron transfer with translocation of ions across the membrane. This Serratia proteamaculans (strain 568) protein is Ion-translocating oxidoreductase complex subunit A.